The primary structure comprises 127 residues: Large ribosomal subunit protein bL17 (127 aa).

The protein belongs to the bacterial ribosomal protein bL17 family. As to quaternary structure, part of the 50S ribosomal subunit. Contacts protein L32.

This chain is Large ribosomal subunit protein bL17, found in Fervidobacterium nodosum (strain ATCC 35602 / DSM 5306 / Rt17-B1).